A 110-amino-acid polypeptide reads, in one-letter code: Large ribosomal subunit protein uL22 (110 aa).

Belongs to the universal ribosomal protein uL22 family. In terms of assembly, part of the 50S ribosomal subunit.

Its function is as follows. This protein binds specifically to 23S rRNA; its binding is stimulated by other ribosomal proteins, e.g. L4, L17, and L20. It is important during the early stages of 50S assembly. It makes multiple contacts with different domains of the 23S rRNA in the assembled 50S subunit and ribosome. In terms of biological role, the globular domain of the protein is located near the polypeptide exit tunnel on the outside of the subunit, while an extended beta-hairpin is found that lines the wall of the exit tunnel in the center of the 70S ribosome. The sequence is that of Large ribosomal subunit protein uL22 from Pasteurella multocida (strain Pm70).